The primary structure comprises 352 residues: Alanine racemase (352 aa).

Lys-33 functions as the Proton acceptor; specific for D-alanine in the catalytic mechanism. Lys-33 bears the N6-(pyridoxal phosphate)lysine mark. A substrate-binding site is contributed by Arg-129. Tyr-250 acts as the Proton acceptor; specific for L-alanine in catalysis. Met-298 contributes to the substrate binding site.

The protein belongs to the alanine racemase family. Requires pyridoxal 5'-phosphate as cofactor.

It carries out the reaction L-alanine = D-alanine. Its pathway is amino-acid biosynthesis; D-alanine biosynthesis; D-alanine from L-alanine: step 1/1. Functionally, catalyzes the interconversion of L-alanine and D-alanine. May also act on other amino acids. The protein is Alanine racemase (alr) of Neisseria meningitidis serogroup C / serotype 2a (strain ATCC 700532 / DSM 15464 / FAM18).